The following is a 273-amino-acid chain: NADPH-dependent 7-cyano-7-deazaguanine reductase (273 aa).

80–82 (VES) provides a ligand contact to substrate. 82 to 83 (SK) is an NADPH binding site. The active-site Thioimide intermediate is the C180. The Proton donor role is filled by D187. 219-220 (HE) lines the substrate pocket. 248–249 (RG) is a binding site for NADPH.

This sequence belongs to the GTP cyclohydrolase I family. QueF type 2 subfamily. Homodimer.

Its subcellular location is the cytoplasm. The catalysed reaction is 7-aminomethyl-7-carbaguanine + 2 NADP(+) = 7-cyano-7-deazaguanine + 2 NADPH + 3 H(+). It participates in tRNA modification; tRNA-queuosine biosynthesis. Its function is as follows. Catalyzes the NADPH-dependent reduction of 7-cyano-7-deazaguanine (preQ0) to 7-aminomethyl-7-deazaguanine (preQ1). In Bordetella parapertussis (strain 12822 / ATCC BAA-587 / NCTC 13253), this protein is NADPH-dependent 7-cyano-7-deazaguanine reductase.